The primary structure comprises 237 residues: Probable transcriptional regulatory protein Exig_1693 (237 aa).

Belongs to the TACO1 family. YeeN subfamily.

Its subcellular location is the cytoplasm. The sequence is that of Probable transcriptional regulatory protein Exig_1693 from Exiguobacterium sibiricum (strain DSM 17290 / CCUG 55495 / CIP 109462 / JCM 13490 / 255-15).